The following is a 478-amino-acid chain: Ribulose bisphosphate carboxylase large chain (478 aa).

Positions 1–2 (MS) are excised as a propeptide. The residue at position 3 (proline 3) is an N-acetylproline. The residue at position 14 (lysine 14) is an N6,N6,N6-trimethyllysine. Substrate is bound by residues asparagine 123 and threonine 173. Lysine 175 serves as the catalytic Proton acceptor. Lysine 177 lines the substrate pocket. Residues lysine 201, aspartate 203, and glutamate 204 each coordinate Mg(2+). Position 201 is an N6-carboxylysine (lysine 201). Histidine 294 (proton acceptor) is an active-site residue. Substrate contacts are provided by arginine 295, histidine 327, and serine 379.

This sequence belongs to the RuBisCO large chain family. Type I subfamily. In terms of assembly, heterohexadecamer of 8 large chains and 8 small chains; disulfide-linked. The disulfide link is formed within the large subunit homodimers. Requires Mg(2+) as cofactor. Post-translationally, the disulfide bond which can form in the large chain dimeric partners within the hexadecamer appears to be associated with oxidative stress and protein turnover.

Its subcellular location is the plastid. The protein resides in the chloroplast. The catalysed reaction is 2 (2R)-3-phosphoglycerate + 2 H(+) = D-ribulose 1,5-bisphosphate + CO2 + H2O. The enzyme catalyses D-ribulose 1,5-bisphosphate + O2 = 2-phosphoglycolate + (2R)-3-phosphoglycerate + 2 H(+). RuBisCO catalyzes two reactions: the carboxylation of D-ribulose 1,5-bisphosphate, the primary event in carbon dioxide fixation, as well as the oxidative fragmentation of the pentose substrate in the photorespiration process. Both reactions occur simultaneously and in competition at the same active site. This Neurachne munroi protein is Ribulose bisphosphate carboxylase large chain.